The following is a 439-amino-acid chain: Transcriptional enhancer factor TEF-5 (439 aa).

Positions 1–12 are enriched in polar residues; the sequence is MASNSWTANSSP. The disordered stretch occupies residues 1–34; the sequence is MASNSWTANSSPGEAREDGSEGLDKGLDNDAEGV. Residue Ala2 is modified to N-acetylalanine. A compositionally biased stretch (basic and acidic residues) spans 14–28; the sequence is EAREDGSEGLDKGLD. Residues 28–104 constitute a DNA-binding region (TEA); sequence DNDAEGVWSP…QVLARKKVRE (77 aa). Ser148 is subject to Phosphoserine. The segment at 173–439 is transcriptional activation; that stretch reads GPSQDIKPFA…QHHVYKLVKD (267 aa).

As to quaternary structure, interacts with YAP1 and WWTR1/TAZ. As to expression, expressed in embryos as well as in many adult tissues.

It is found in the nucleus. Transcription factor which plays a key role in the Hippo signaling pathway, a pathway involved in organ size control and tumor suppression by restricting proliferation and promoting apoptosis. The core of this pathway is composed of a kinase cascade wherein MST1/MST2, in complex with its regulatory protein SAV1, phosphorylates and activates LATS1/2 in complex with its regulatory protein MOB1, which in turn phosphorylates and inactivates YAP1 oncoprotein and WWTR1/TAZ. Acts by mediating gene expression of YAP1 and WWTR1/TAZ, thereby regulating cell proliferation, migration and epithelial mesenchymal transition (EMT) induction. This Mus musculus (Mouse) protein is Transcriptional enhancer factor TEF-5 (Tead3).